The following is a 154-amino-acid chain: Superoxide dismutase [Cu-Zn] (154 aa).

Histidine 47, histidine 49, and histidine 64 together coordinate Cu cation. Residues cysteine 58 and cysteine 147 are joined by a disulfide bond. Zn(2+)-binding residues include histidine 64, histidine 72, histidine 81, and aspartate 84. Residue histidine 121 participates in Cu cation binding. The segment covering 125–136 has biased composition (basic and acidic residues); sequence DDLGKGGNEESL. Residues 125 to 144 form a disordered region; it reads DDLGKGGNEESLKTGNAGPR. Position 144 (arginine 144) interacts with substrate.

It belongs to the Cu-Zn superoxide dismutase family. In terms of assembly, homodimer. Cu cation is required as a cofactor. The cofactor is Zn(2+).

The protein localises to the cytoplasm. It catalyses the reaction 2 superoxide + 2 H(+) = H2O2 + O2. In terms of biological role, destroys radicals which are normally produced within the cells and which are toxic to biological systems. The polypeptide is Superoxide dismutase [Cu-Zn] (SOD1) (Cordyceps tenuipes (Entomopathogenic fungus)).